Consider the following 149-residue polypeptide: MTQQIKLLVLNGPNLNLLGQREPEVYGSKTLDDIIKALTDEAALQNVALSHLQSNREYELIEKIHDAFEKIDFIIINPAAFTHTSVALRDALLGVNIPFIEVHLSNVHARESFRHHSYLSDIAQGVICGLGAKGYSFALQSAIGKLRNI.

The Proton acceptor role is filled by Tyr26. Substrate contacts are provided by Asn77, His83, and Asp90. Residue His103 is the Proton donor of the active site. Substrate contacts are provided by residues 104-105 and Arg114; that span reads LS.

This sequence belongs to the type-II 3-dehydroquinase family. Homododecamer.

It carries out the reaction 3-dehydroquinate = 3-dehydroshikimate + H2O. It functions in the pathway metabolic intermediate biosynthesis; chorismate biosynthesis; chorismate from D-erythrose 4-phosphate and phosphoenolpyruvate: step 3/7. Catalyzes a trans-dehydration via an enolate intermediate. The chain is 3-dehydroquinate dehydratase from Psychromonas ingrahamii (strain DSM 17664 / CCUG 51855 / 37).